Here is a 156-residue protein sequence, read N- to C-terminus: MKLIVAAVGTRMPDWVETAWDDYAKRLPADCALELREIKPEPRTSGKTPAQMMAAEARRIEAALPAGALRIALDERGRDLTTVGLSQQLEKWRGEGRDVAFLVGGPDGLDAQLKASCGGLIRLSSLTLPHPMVRVLLSEQLYRAWAILTNHPYHRA.

Residues L73, G104, and 123 to 128 (LSSLTL) each bind S-adenosyl-L-methionine.

It belongs to the RNA methyltransferase RlmH family. Homodimer.

Its subcellular location is the cytoplasm. The enzyme catalyses pseudouridine(1915) in 23S rRNA + S-adenosyl-L-methionine = N(3)-methylpseudouridine(1915) in 23S rRNA + S-adenosyl-L-homocysteine + H(+). Its function is as follows. Specifically methylates the pseudouridine at position 1915 (m3Psi1915) in 23S rRNA. In Bordetella avium (strain 197N), this protein is Ribosomal RNA large subunit methyltransferase H.